The sequence spans 393 residues: MAKLTTNTFFNTKNIVAFSFFLVFLIVISVIVTIFFLGVSVDDVKTIITAINYQNWGWIFVVILGFLVSVLWNVIINWWVSRRFCFYASWWEWLLFGFVVQFFQIVTPLSLGQDPFRLYWFIKKGMKKQTAVLIVTSTGAFWNLSQALITWPSFFVLSKNYQLLANNHNSFVSYWLSLTGMIFDVVVAILFIVIAFNKKMHVLIYSLVNQFRKWLKRPYLTKEQIYQRFIEKAEFNKLYGIEMRRWGLTIFKLLANMVVAIVSYFSLFGVFMITKTVNTTNNVIDQYSLIDLFNITNIAVTASNFIPVASGEGATQFVMTSFLNAFKPTDQFLHDQIKDGVFLWRLLSVYLPAIFTGICFVVWIVQVIWEFKKTVNVPLKTVNTVSLETKKDK.

8 helical membrane passes run 15-35 (IVAFSFFLVFLIVISVIVTIF), 56-76 (WGWIFVVILGFLVSVLWNVII), 86-106 (FYASWWEWLLFGFVVQFFQIV), 131-151 (AVLIVTSTGAFWNLSQALITW), 176-196 (LSLTGMIFDVVVAILFIVIAF), 253-273 (LLANMVVAIVSYFSLFGVFMI), 289-309 (LIDLFNITNIAVTASNFIPVA), and 349-369 (VYLPAIFTGICFVVWIVQVIW).

It is found in the cell membrane. This is an uncharacterized protein from Mycoplasma genitalium (strain ATCC 33530 / DSM 19775 / NCTC 10195 / G37) (Mycoplasmoides genitalium).